A 161-amino-acid polypeptide reads, in one-letter code: Long arms of the bivalent protein 1 (161 aa).

The short motif at K72–W75 is the PP1 binding motif element. The interval G85–S161 is disordered. Residues Q97–N115 are compositionally biased toward polar residues. Positions N120 to T129 are enriched in basic and acidic residues. Positions F130–D151 are enriched in acidic residues.

As to quaternary structure, interacts with gsp-1 and gsp-2; the interaction is direct.

The protein resides in the chromosome. Its subcellular location is the nucleus. In terms of biological role, involved in sister chromatid cohesion during mitosis and meiosis. In association with the gsp-2 phosphatase, it both restricts the localization and antagonizes the function of the air-2 kinase during meiosis I and mitosis to promote chromatid cohesion and spindle attachment. This in turn, drives germ cell immortality. Furthermore, may play a role in ensuring the timely assembly of the synaptonemal complex during prophase I of meiosis. This chain is Long arms of the bivalent protein 1, found in Caenorhabditis elegans.